A 1105-amino-acid chain; its full sequence is Lysylphosphatidylglycerol biosynthesis bifunctional protein LysX (1105 aa).

Positions 1 to 603 are phosphatidylglycerol lysyltransferase; sequence MTVTKPRSVQ…LLHHDGSAPD (603 aa). 7 consecutive transmembrane segments (helical) span residues 20–40, 62–82, 86–106, 117–137, 154–174, 186–203, and 208–228; these read VPAAAGWAVGVIATLSLLASI, FPDTSFAWSFVLALLAAALAA, IAWLLLLTNVVLAAFLNAADI, FGENLGFAVHVVAIVVLVLGY, AVLVAGGAIGILVSWGLVELF, YVANRVIGFALADPDLFT, and VFLNAMFGLFGALALIAATIV. Positions 604 to 1105 are lysine--tRNA ligase; that stretch reads VSGLRQSAIA…TLPFPLAKPH (502 aa). Mg(2+) is bound by residues Asp-1017 and Glu-1024.

In the N-terminal section; belongs to the LPG synthetase family. It in the C-terminal section; belongs to the class-II aminoacyl-tRNA synthetase family. The cofactor is Mg(2+).

Its subcellular location is the cell membrane. It carries out the reaction tRNA(Lys) + L-lysine + ATP = L-lysyl-tRNA(Lys) + AMP + diphosphate. The enzyme catalyses L-lysyl-tRNA(Lys) + a 1,2-diacyl-sn-glycero-3-phospho-(1'-sn-glycerol) = a 1,2-diacyl-sn-glycero-3-phospho-1'-(3'-O-L-lysyl)-sn-glycerol + tRNA(Lys). Functionally, catalyzes the production of L-lysyl-tRNA(Lys)transfer and the transfer of a lysyl group from L-lysyl-tRNA(Lys) to membrane-bound phosphatidylglycerol (PG), which produces lysylphosphatidylglycerol (LPG), one of the components of the bacterial membrane with a positive net charge. LPG synthesis contributes to the resistance to cationic antimicrobial peptides (CAMPs) and likely protects M.tuberculosis against the CAMPs produced by competiting microorganisms (bacteriocins). In fact, the modification of anionic phosphatidylglycerol with positively charged L-lysine results in repulsion of the peptides. The polypeptide is Lysylphosphatidylglycerol biosynthesis bifunctional protein LysX (lysX) (Mycobacterium marinum (strain ATCC BAA-535 / M)).